Consider the following 561-residue polypeptide: Putative ABC transporter ATP-binding protein SAV_5847 (561 aa).

One can recognise an ABC transporter 1 domain in the interval 2–243; it reads IRFEDVSVTY…SPVYPPVVDL (242 aa). Residue 36 to 43 coordinates ATP; sequence GPSGVGKS. The interval 268-299 is disordered; that stretch reads ERLAATETPTPTATATATAAPAPSPSRPRRPR. The span at 272-288 shows a compositional bias: low complexity; the sequence is ATETPTPTATATATAAP. The 229-residue stretch at 315 to 543 folds into the ABC transporter 2 domain; the sequence is AAVEALAVRR…SPSFAPQVTK (229 aa). Position 347–354 (347–354) interacts with ATP; that stretch reads GRNGAGKS.

The protein belongs to the ABC transporter superfamily.

Its subcellular location is the cell membrane. Functionally, probably part of an ABC transporter complex. Responsible for energy coupling to the transport system. The sequence is that of Putative ABC transporter ATP-binding protein SAV_5847 from Streptomyces avermitilis (strain ATCC 31267 / DSM 46492 / JCM 5070 / NBRC 14893 / NCIMB 12804 / NRRL 8165 / MA-4680).